The primary structure comprises 407 residues: Proteasome-activating nucleotidase (407 aa).

The stretch at 22–67 forms a coiled coil; the sequence is KEKTQIAELESKVLRLELKNKDISRENVQIKKENEILKRELDKLRI. ATP contacts are provided by residues 192–197 and His331; that span reads GTGKTL. The interval 405–407 is docks into pockets in the proteasome alpha-ring to cause gate opening; that stretch reads MYG.

Belongs to the AAA ATPase family. As to quaternary structure, homohexamer. The hexameric complex has a two-ring architecture resembling a top hat that caps the 20S proteasome core at one or both ends. Upon ATP-binding, the C-terminus of PAN interacts with the alpha-rings of the proteasome core by binding to the intersubunit pockets.

It localises to the cytoplasm. ATPase which is responsible for recognizing, binding, unfolding and translocation of substrate proteins into the archaeal 20S proteasome core particle. Is essential for opening the gate of the 20S proteasome via an interaction with its C-terminus, thereby allowing substrate entry and access to the site of proteolysis. Thus, the C-termini of the proteasomal ATPase function like a 'key in a lock' to induce gate opening and therefore regulate proteolysis. Unfolding activity requires energy from ATP hydrolysis, whereas ATP binding alone promotes ATPase-20S proteasome association which triggers gate opening, and supports translocation of unfolded substrates. In Methanococcus maripaludis (strain C6 / ATCC BAA-1332), this protein is Proteasome-activating nucleotidase.